The following is a 118-amino-acid chain: Basic phospholipase A2 nigroxin B (118 aa).

7 cysteine pairs are disulfide-bonded: Cys-11–Cys-70, Cys-25–Cys-117, Cys-27–Cys-43, Cys-42–Cys-98, Cys-49–Cys-91, Cys-59–Cys-84, and Cys-77–Cys-89. Ca(2+) is bound by residues Tyr-26, Gly-28, and Gly-30. His-46 is a catalytic residue. Asp-47 provides a ligand contact to Ca(2+). Asp-92 is an active-site residue.

It belongs to the phospholipase A2 family. Group I subfamily. D49 sub-subfamily. Requires Ca(2+) as cofactor. As to expression, expressed by the venom gland.

It is found in the secreted. It catalyses the reaction a 1,2-diacyl-sn-glycero-3-phosphocholine + H2O = a 1-acyl-sn-glycero-3-phosphocholine + a fatty acid + H(+). In terms of biological role, snake venom phospholipase A2 (PLA2) that has only a weak enzymatic activity. It has a myotoxic activity in vivo (dystrophic effect). PLA2 catalyzes the calcium-dependent hydrolysis of the 2-acyl groups in 3-sn-phosphoglycerides. This Micrurus nigrocinctus (Central American coral snake) protein is Basic phospholipase A2 nigroxin B.